Reading from the N-terminus, the 212-residue chain is FMN-dependent NADH:quinone oxidoreductase (212 aa).

FMN-binding positions include serine 10 and 17-19; that span reads SFS.

This sequence belongs to the azoreductase type 1 family. As to quaternary structure, homodimer. FMN serves as cofactor.

It carries out the reaction 2 a quinone + NADH + H(+) = 2 a 1,4-benzosemiquinone + NAD(+). The enzyme catalyses N,N-dimethyl-1,4-phenylenediamine + anthranilate + 2 NAD(+) = 2-(4-dimethylaminophenyl)diazenylbenzoate + 2 NADH + 2 H(+). Its function is as follows. Quinone reductase that provides resistance to thiol-specific stress caused by electrophilic quinones. In terms of biological role, also exhibits azoreductase activity. Catalyzes the reductive cleavage of the azo bond in aromatic azo compounds to the corresponding amines. The sequence is that of FMN-dependent NADH:quinone oxidoreductase from Malacoplasma penetrans (strain HF-2) (Mycoplasma penetrans).